Here is a 122-residue protein sequence, read N- to C-terminus: Large ribosomal subunit protein uL14 (122 aa).

This sequence belongs to the universal ribosomal protein uL14 family. As to quaternary structure, part of the 50S ribosomal subunit. Forms a cluster with proteins L3 and L19. In the 70S ribosome, L14 and L19 interact and together make contacts with the 16S rRNA in bridges B5 and B8.

Binds to 23S rRNA. Forms part of two intersubunit bridges in the 70S ribosome. In Picosynechococcus sp. (strain ATCC 27264 / PCC 7002 / PR-6) (Agmenellum quadruplicatum), this protein is Large ribosomal subunit protein uL14.